A 105-amino-acid polypeptide reads, in one-letter code: Large ribosomal subunit protein uL24 (105 aa).

It belongs to the universal ribosomal protein uL24 family. In terms of assembly, part of the 50S ribosomal subunit.

Its function is as follows. One of two assembly initiator proteins, it binds directly to the 5'-end of the 23S rRNA, where it nucleates assembly of the 50S subunit. Functionally, one of the proteins that surrounds the polypeptide exit tunnel on the outside of the subunit. This is Large ribosomal subunit protein uL24 from Leptothrix cholodnii (strain ATCC 51168 / LMG 8142 / SP-6) (Leptothrix discophora (strain SP-6)).